The sequence spans 175 residues: MTAFTRFAHSRASWLILTGSAIALEAAALYFQYVMKLDPCVMCIYQRLAVFGILAAGLIGMTAPKYRIVRILGALGWAVSATWGLKLALALVDMQNNPSPFSTCSFLPEFPAWMPLHEWFPSVMLPTGMCTDVPWQFMGVTMAEWMVVAFSGYLVALLLFIVPILSGSNKPSLYK.

Residues 1–13 (MTAFTRFAHSRAS) lie on the Cytoplasmic side of the membrane. A helical transmembrane segment spans residues 14–30 (WLILTGSAIALEAAALY). The Periplasmic portion of the chain corresponds to 31-48 (FQYVMKLDPCVMCIYQRL). A disulfide bridge links C40 with C43. A helical membrane pass occupies residues 49–64 (AVFGILAAGLIGMTAP). The Cytoplasmic portion of the chain corresponds to 65–71 (KYRIVRI). A helical membrane pass occupies residues 72–89 (LGALGWAVSATWGLKLAL). Over 90–144 (ALVDMQNNPSPFSTCSFLPEFPAWMPLHEWFPSVMLPTGMCTDVPWQFMGVTMAE) the chain is Periplasmic. A disulfide bridge links C104 with C130. The helical transmembrane segment at 145–163 (WMVVAFSGYLVALLLFIVP) threads the bilayer. Residues 164-175 (ILSGSNKPSLYK) are Cytoplasmic-facing.

Belongs to the DsbB family.

The protein localises to the cell inner membrane. In terms of biological role, required for disulfide bond formation in some periplasmic proteins. Acts by oxidizing the DsbA protein. This chain is Disulfide bond formation protein B, found in Shewanella sp. (strain MR-4).